The sequence spans 255 residues: Geranylgeranylglyceryl phosphate synthase (255 aa).

Asp34 and Thr64 together coordinate Mg(2+). Sn-glycerol 1-phosphate-binding positions include 182–188 (YLEAGSG), 213–214 (GG), and 235–236 (GN).

It belongs to the GGGP/HepGP synthase family. Group II subfamily. Mg(2+) serves as cofactor.

The protein localises to the cytoplasm. The enzyme catalyses sn-glycerol 1-phosphate + (2E,6E,10E)-geranylgeranyl diphosphate = sn-3-O-(geranylgeranyl)glycerol 1-phosphate + diphosphate. Its pathway is membrane lipid metabolism; glycerophospholipid metabolism. Prenyltransferase that catalyzes the transfer of the geranylgeranyl moiety of geranylgeranyl diphosphate (GGPP) to the C3 hydroxyl of sn-glycerol-1-phosphate (G1P). This reaction is the first ether-bond-formation step in the biosynthesis of archaeal membrane lipids. In Saccharolobus solfataricus (strain ATCC 35092 / DSM 1617 / JCM 11322 / P2) (Sulfolobus solfataricus), this protein is Geranylgeranylglyceryl phosphate synthase.